A 189-amino-acid chain; its full sequence is Interferon alpha-1 (189 aa).

An N-terminal signal peptide occupies residues 1–23; sequence MAPAWSLLLALLLLSCNAICSLG. Intrachain disulfides connect Cys24–Cys122 and Cys52–Cys162.

This sequence belongs to the alpha/beta interferon family. As to quaternary structure, interacts with CR2.

It is found in the secreted. Produced by macrophages, IFN-alpha have antiviral activities. Interferon stimulates the production of two enzymes: a protein kinase and an oligoadenylate synthetase. The polypeptide is Interferon alpha-1 (Bos taurus (Bovine)).